We begin with the raw amino-acid sequence, 511 residues long: 2-isopropylmalate synthase (511 aa).

The 264-residue stretch at 6 to 269 folds into the Pyruvate carboxyltransferase domain; sequence IIIFDTTLRD…YTDIKCENIF (264 aa). Aspartate 15, histidine 203, histidine 205, and asparagine 239 together coordinate Mn(2+). The interval 394 to 511 is regulatory domain; the sequence is VLEKLSVISG…SLKVEERKMA (118 aa).

It belongs to the alpha-IPM synthase/homocitrate synthase family. LeuA type 1 subfamily. Homodimer. Requires Mn(2+) as cofactor.

Its subcellular location is the cytoplasm. The enzyme catalyses 3-methyl-2-oxobutanoate + acetyl-CoA + H2O = (2S)-2-isopropylmalate + CoA + H(+). It participates in amino-acid biosynthesis; L-leucine biosynthesis; L-leucine from 3-methyl-2-oxobutanoate: step 1/4. Functionally, catalyzes the condensation of the acetyl group of acetyl-CoA with 3-methyl-2-oxobutanoate (2-ketoisovalerate) to form 3-carboxy-3-hydroxy-4-methylpentanoate (2-isopropylmalate). The protein is 2-isopropylmalate synthase of Campylobacter jejuni subsp. jejuni serotype O:2 (strain ATCC 700819 / NCTC 11168).